A 485-amino-acid polypeptide reads, in one-letter code: Solute carrier family 35 member F4 (485 aa).

Composition is skewed to polar residues over residues 32–42 (SQKSTTRSSVT) and 50–64 (CPSSHSSISRQLSPL). Disordered regions lie at residues 32–64 (SQKSTTRSSVTRCKPGPNCPSSHSSISRQLSPL) and 78–111 (QSRGSSGVCGRRVERQSRSGDDGTQTRPESSSQE). Residues 88–98 (RRVERQSRSGD) show a composition bias toward basic and acidic residues. Polar residues predominate over residues 99–111 (DGTQTRPESSSQE). 10 consecutive transmembrane segments (helical) span residues 129-149 (IWGLLIILSVSSSWVGTTQIV), 156-176 (FYCPFFMTWFSTNWNIMFFPV), 217-234 (APFSILWTLTNYLYLLAL), 241-261 (DVSALFCCNKAFVFLLSWIVL), 265-285 (FMGVRIVAAIMAITGIVMMAY), 294-314 (IIGVAFAVGSASTSALYKVLF), 329-349 (FVSTLGFFNLIFISFTPIILY), 359-381 (FAALPWGCLCGMAGLWLAFNILV), 383-405 (VGVVLTYPILISIGTVLSVPGNA), and 414-434 (VIFNVVRLAATIIICIGFLLM). Residues 225-285 (LTNYLYLLAL…AITGIVMMAY (61 aa)) form the EamA domain.

It belongs to the SLC35F solute transporter family.

It is found in the membrane. In terms of biological role, putative solute transporter. In Mus musculus (Mouse), this protein is Solute carrier family 35 member F4 (Slc35f4).